Here is a 338-residue protein sequence, read N- to C-terminus: Dihydroorotate dehydrogenase (quinone) (338 aa).

FMN contacts are provided by residues 59–63 and threonine 83; that span reads AGLDK. A substrate-binding site is contributed by lysine 63. Substrate is bound at residue 108–112; the sequence is NRMGF. Residues asparagine 136 and asparagine 169 each contribute to the FMN site. Residue asparagine 169 participates in substrate binding. Catalysis depends on serine 172, which acts as the Nucleophile. Asparagine 174 is a substrate binding site. FMN-binding residues include lysine 214 and threonine 242. 243–244 serves as a coordination point for substrate; that stretch reads NT. FMN is bound by residues glycine 265, glycine 294, and 315-316; that span reads YS.

This sequence belongs to the dihydroorotate dehydrogenase family. Type 2 subfamily. As to quaternary structure, monomer. FMN is required as a cofactor.

It is found in the cell membrane. It carries out the reaction (S)-dihydroorotate + a quinone = orotate + a quinol. Its pathway is pyrimidine metabolism; UMP biosynthesis via de novo pathway; orotate from (S)-dihydroorotate (quinone route): step 1/1. In terms of biological role, catalyzes the conversion of dihydroorotate to orotate with quinone as electron acceptor. This chain is Dihydroorotate dehydrogenase (quinone), found in Azoarcus sp. (strain BH72).